The sequence spans 466 residues: VGFKAGVKEYKLTYYTPEYETKDTDILAAFRVTPQPGVPPEEAGAAVAAESSTGTWTTVWTDGLTSLDRYKGRCYNIEPVPGEADQYICYVAYPLDLFEEGSVTNMFTSIVGNVFGFKALRALRLEDLRIPVAYVKTFQGPPHGIQVERDKLNKYGRPLLGCTIKPKLGLSAKNYGRACYECLRGGLDFTKDDENVNSQPFMRWRDRFLFCAEAIYKSQAETGEIKGHYLNATAGTCEEMMKRAIFARELGVPIVMHDYLTGGFTANTSLAHYCRDNGLLLHIHRAMHAVIDRQKNHGMHFRVLAKALRMSGGDHIHAGTVVGKLEGERDITLGFVDLLRDDFIEKDRSRGIYFTQDWVSLPGVIPVASGGIHVWHMPALTEIFGDDSVLQFGGGTLGHPWGNAPGAAANRVALEACVQARNEGRDLAAEGNTIIREASKWSPELAAACEVWKEIKFEFKAVDTLD.

At K4 the chain carries N6,N6,N6-trimethyllysine. Positions 113 and 163 each coordinate substrate. The active-site Proton acceptor is the K165. K167 lines the substrate pocket. Mg(2+)-binding residues include K191, D193, and E194. At K191 the chain carries N6-carboxylysine. H284 acts as the Proton acceptor in catalysis. Residues R285, H317, and S369 each contribute to the substrate site.

This sequence belongs to the RuBisCO large chain family. Type I subfamily. As to quaternary structure, heterohexadecamer of 8 large chains and 8 small chains; disulfide-linked. The disulfide link is formed within the large subunit homodimers. Requires Mg(2+) as cofactor. Post-translationally, the disulfide bond which can form in the large chain dimeric partners within the hexadecamer appears to be associated with oxidative stress and protein turnover.

Its subcellular location is the plastid. The protein resides in the chloroplast. The enzyme catalyses 2 (2R)-3-phosphoglycerate + 2 H(+) = D-ribulose 1,5-bisphosphate + CO2 + H2O. It catalyses the reaction D-ribulose 1,5-bisphosphate + O2 = 2-phosphoglycolate + (2R)-3-phosphoglycerate + 2 H(+). RuBisCO catalyzes two reactions: the carboxylation of D-ribulose 1,5-bisphosphate, the primary event in carbon dioxide fixation, as well as the oxidative fragmentation of the pentose substrate in the photorespiration process. Both reactions occur simultaneously and in competition at the same active site. This is Ribulose bisphosphate carboxylase large chain from Nelsonia canescens (Blue pussyleaf).